Reading from the N-terminus, the 208-residue chain is Large ribosomal subunit protein uL3 (208 aa).

Residues 117-149 (FQGVIKRHGQSRGPMAHGSRYHRRPGSMGPVSP) form a disordered region.

It belongs to the universal ribosomal protein uL3 family. As to quaternary structure, part of the 50S ribosomal subunit. Forms a cluster with proteins L14 and L19.

In terms of biological role, one of the primary rRNA binding proteins, it binds directly near the 3'-end of the 23S rRNA, where it nucleates assembly of the 50S subunit. In Streptococcus equi subsp. equi (strain 4047), this protein is Large ribosomal subunit protein uL3.